A 352-amino-acid polypeptide reads, in one-letter code: Chorismate synthase (352 aa).

Residue R48 coordinates NADP(+). Residues 125–127 (RSS), 237–238 (NA), G278, 293–297 (KPTSS), and R319 contribute to the FMN site.

The protein belongs to the chorismate synthase family. In terms of assembly, homotetramer. The cofactor is FMNH2.

It catalyses the reaction 5-O-(1-carboxyvinyl)-3-phosphoshikimate = chorismate + phosphate. Its pathway is metabolic intermediate biosynthesis; chorismate biosynthesis; chorismate from D-erythrose 4-phosphate and phosphoenolpyruvate: step 7/7. Its function is as follows. Catalyzes the anti-1,4-elimination of the C-3 phosphate and the C-6 proR hydrogen from 5-enolpyruvylshikimate-3-phosphate (EPSP) to yield chorismate, which is the branch point compound that serves as the starting substrate for the three terminal pathways of aromatic amino acid biosynthesis. This reaction introduces a second double bond into the aromatic ring system. In Francisella tularensis subsp. holarctica (strain FTNF002-00 / FTA), this protein is Chorismate synthase.